Here is a 138-residue protein sequence, read N- to C-terminus: Transcription antitermination protein NusB (138 aa).

The protein belongs to the NusB family.

Functionally, involved in transcription antitermination. Required for transcription of ribosomal RNA (rRNA) genes. Binds specifically to the boxA antiterminator sequence of the ribosomal RNA (rrn) operons. In Alkaliphilus oremlandii (strain OhILAs) (Clostridium oremlandii (strain OhILAs)), this protein is Transcription antitermination protein NusB.